The following is a 159-amino-acid chain: 3-hydroxyacyl-[acyl-carrier-protein] dehydratase FabZ (159 aa).

Histidine 62 is a catalytic residue.

The protein belongs to the thioester dehydratase family. FabZ subfamily.

Its subcellular location is the cytoplasm. The catalysed reaction is a (3R)-hydroxyacyl-[ACP] = a (2E)-enoyl-[ACP] + H2O. Functionally, involved in unsaturated fatty acids biosynthesis. Catalyzes the dehydration of short chain beta-hydroxyacyl-ACPs and long chain saturated and unsaturated beta-hydroxyacyl-ACPs. The chain is 3-hydroxyacyl-[acyl-carrier-protein] dehydratase FabZ from Methylobacterium nodulans (strain LMG 21967 / CNCM I-2342 / ORS 2060).